A 501-amino-acid chain; its full sequence is Cytochrome P450 2J4 (501 aa).

Helical transmembrane passes span 12–32 (IWAA…LLLA) and 77–97 (NIFS…LPLI). Cys-447 lines the heme pocket.

This sequence belongs to the cytochrome P450 family. The cofactor is heme. In terms of tissue distribution, expressed in small intestinal enterocytes (at protein level). In the intestinal crypt, expressed at higher levels in the mature villous cells than in undifferentiated crypt cells (at protein level). Expressed in liver, kidney, lung, and olfactory mucosa (at protein level).

The protein localises to the endoplasmic reticulum membrane. It is found in the microsome membrane. The catalysed reaction is an organic molecule + reduced [NADPH--hemoprotein reductase] + O2 = an alcohol + oxidized [NADPH--hemoprotein reductase] + H2O + H(+). It catalyses the reaction (5Z,8Z,11Z,14Z)-eicosatetraenoate + reduced [NADPH--hemoprotein reductase] + O2 = 19-hydroxy-(5Z,8Z,11Z,14Z)-eicosatetraenoate + oxidized [NADPH--hemoprotein reductase] + H2O + H(+). The enzyme catalyses all-trans-retinal + reduced [NADPH--hemoprotein reductase] + O2 = all-trans-retinoate + oxidized [NADPH--hemoprotein reductase] + H2O + 2 H(+). It carries out the reaction 9-cis-retinal + reduced [NADPH--hemoprotein reductase] + O2 = 9-cis-retinoate + oxidized [NADPH--hemoprotein reductase] + H2O + 2 H(+). Its pathway is lipid metabolism; arachidonate metabolism. It functions in the pathway cofactor metabolism; retinol metabolism. In terms of biological role, a cytochrome P450 monooxygenase that may play a major role in intestinal retinoid metabolism. Catalyzes the oxidative transformation of all-trans retinal and 9-cis-retinal to the corresponding active forms all-trans and 9-cis retinoic acids. Catalyzes the hydroxylation of carbon-hydrogen bonds. Hydroxylates arachidonic acid predominantly at the omega-1 position. Mechanistically, uses molecular oxygen inserting one oxygen atom into a substrate, and reducing the second into a water molecule, with two electrons provided by NADPH via cytochrome P450 reductase (CPR; NADPH--hemoprotein reductase). This chain is Cytochrome P450 2J4, found in Rattus norvegicus (Rat).